Reading from the N-terminus, the 305-residue chain is Glycine--tRNA ligase alpha subunit (305 aa).

The protein belongs to the class-II aminoacyl-tRNA synthetase family. As to quaternary structure, tetramer of two alpha and two beta subunits.

It is found in the cytoplasm. It carries out the reaction tRNA(Gly) + glycine + ATP = glycyl-tRNA(Gly) + AMP + diphosphate. This is Glycine--tRNA ligase alpha subunit from Streptococcus pneumoniae (strain ATCC BAA-255 / R6).